A 456-amino-acid polypeptide reads, in one-letter code: Probable tRNA(Ile)-lysidine synthase (456 aa).

Position 30-35 (30-35 (SGGVDS)) interacts with ATP.

Belongs to the tRNA(Ile)-lysidine synthase family.

It localises to the cytoplasm. It carries out the reaction cytidine(34) in tRNA(Ile2) + L-lysine + ATP = lysidine(34) in tRNA(Ile2) + AMP + diphosphate + H(+). Functionally, ligates lysine onto the cytidine present at position 34 of the AUA codon-specific tRNA(Ile) that contains the anticodon CAU, in an ATP-dependent manner. Cytidine is converted to lysidine, thus changing the amino acid specificity of the tRNA from methionine to isoleucine. The chain is Probable tRNA(Ile)-lysidine synthase from Schizosaccharomyces pombe (strain 972 / ATCC 24843) (Fission yeast).